Reading from the N-terminus, the 732-residue chain is Elongation factor 2 (732 aa).

Residues 19 to 260 (ERIRNIGIAA…MVVRHLPSPI (242 aa)) form the tr-type G domain. GTP-binding positions include 28-35 (AHIDHGKT), 94-98 (DTPGH), and 148-151 (NKVD). Position 597 is a diphthamide (His597).

The protein belongs to the TRAFAC class translation factor GTPase superfamily. Classic translation factor GTPase family. EF-G/EF-2 subfamily.

Its subcellular location is the cytoplasm. Its function is as follows. Catalyzes the GTP-dependent ribosomal translocation step during translation elongation. During this step, the ribosome changes from the pre-translocational (PRE) to the post-translocational (POST) state as the newly formed A-site-bound peptidyl-tRNA and P-site-bound deacylated tRNA move to the P and E sites, respectively. Catalyzes the coordinated movement of the two tRNA molecules, the mRNA and conformational changes in the ribosome. In Pyrococcus horikoshii (strain ATCC 700860 / DSM 12428 / JCM 9974 / NBRC 100139 / OT-3), this protein is Elongation factor 2 (fusA).